Here is a 423-residue protein sequence, read N- to C-terminus: 26S proteasome regulatory subunit 6A homolog (423 aa).

211 to 218 contributes to the ATP binding site; it reads GPPGTGKT.

This sequence belongs to the AAA ATPase family.

The protein resides in the cytoplasm. The protein localises to the nucleus. In terms of biological role, the 26S proteasome is involved in the ATP-dependent degradation of ubiquitinated proteins. The regulatory (or ATPase) complex confers ATP dependency and substrate specificity to the 26S complex. The chain is 26S proteasome regulatory subunit 6A homolog (TBP1) from Solanum lycopersicum (Tomato).